The primary structure comprises 236 residues: Purine nucleoside phosphorylase DeoD-type (236 aa).

His-5 serves as a coordination point for a purine D-ribonucleoside. Residues Gly-21, Arg-25, Arg-44, and 88-91 (RVGT) contribute to the phosphate site. Residues 180-182 (EME) and 204-205 (SD) each bind a purine D-ribonucleoside. Asp-205 serves as the catalytic Proton donor.

Belongs to the PNP/UDP phosphorylase family. As to quaternary structure, homohexamer; trimer of homodimers.

It carries out the reaction a purine D-ribonucleoside + phosphate = a purine nucleobase + alpha-D-ribose 1-phosphate. It catalyses the reaction a purine 2'-deoxy-D-ribonucleoside + phosphate = a purine nucleobase + 2-deoxy-alpha-D-ribose 1-phosphate. In terms of biological role, catalyzes the reversible phosphorolytic breakdown of the N-glycosidic bond in the beta-(deoxy)ribonucleoside molecules, with the formation of the corresponding free purine bases and pentose-1-phosphate. In Shewanella sp. (strain MR-4), this protein is Purine nucleoside phosphorylase DeoD-type.